An 843-amino-acid chain; its full sequence is Envelope glycoprotein gp160 (843 aa).

Residues 1-33 form the signal peptide; that stretch reads MRVREMQRNWQHLGKWGLLFLGILIICNANATD. The N-linked (GlcNAc...) asparagine; by host glycan is linked to Asn30. Residues 34–671 are Extracellular-facing; sequence DLWVTVYYGV…ITNWLWYIKI (638 aa). A disulfide bridge connects residues Cys55 and Cys75. 18 N-linked (GlcNAc...) asparagine; by host glycosylation sites follow: Asn89, Asn131, Asn136, Asn143, Asn156, Asn160, Asn186, Asn197, Asn234, Asn262, Asn276, Asn289, Asn301, Asn333, Asn338, Asn343, Asn353, and Asn359. 5 disulfide bridges follow: Cys120/Cys205, Cys127/Cys196, Cys132/Cys157, Cys218/Cys247, and Cys228/Cys239. Residues 132 to 156 form a V1 region; it reads CTDVNITMSDINGTSLKEDQGEIKN. The V2 stretch occupies residues 157–196; that stretch reads CSFNVTTELKDKKRKQQALFYRLDVEPIKNSSNIYKLISC. A V3 region spans residues 296–329; that stretch reads CRRPNNNTRKGIRIGPGQTFFATGEIIGDIRKAY. Cysteines 296 and 330 form a disulfide. A CD4-binding loop region spans residues 361–371; it reads SSGGDVEITTH. Cys375 and Cys432 are joined by a disulfide. Residues 382-405 form a V4 region; that stretch reads YNTSGLFNETEVANNTNENITLPC. N-linked (GlcNAc...) asparagine; by host glycans are attached at residues Asn383, Asn389, Asn395, Asn400, and Asn435. V5 stretches follow at residues 448-458 and 450-458; these read DIDGKEILRPI and DGKEILRPI. The interval 499–519 is fusion peptide; it reads AVGMGAVLFGFLGAAGSTMGA. Residues 561–579 form an immunosuppression region; that stretch reads KQLQARILAVERYLKDQQL. A disulfide bridge connects residues Cys585 and Cys591. Residues Asn598, Asn603, Asn612, and Asn624 are each glycosylated (N-linked (GlcNAc...) asparagine; by host). A coiled-coil region spans residues 620–654; that stretch reads KEIDNYTKTIYSLIEDAQNQQERNEQELLALDKWD. The segment at 649–670 is MPER; binding to GalCer; it reads ALDKWDSLWSWFSITNWLWYIK. A helical membrane pass occupies residues 672-692; sequence FIMIVGGLIGLRIVFAVLSVV. Over 693 to 843 the chain is Cytoplasmic; the sequence is NRVRQGYSPL…IRQGAERFLL (151 aa). A YXXL motif; contains endocytosis signal motif is present at residues 699–702; it reads YSPL. The tract at residues 709–731 is disordered; sequence PNPRGPDRPGGIEEEGGEPDRDR. A lipid anchor (S-palmitoyl cysteine; by host) is attached at Cys751. The short motif at 842–843 is the Di-leucine internalization motif element; the sequence is LL.

The protein belongs to the HIV-1 env protein family. The mature envelope protein (Env) consists of a homotrimer of non-covalently associated gp120-gp41 heterodimers. The resulting complex protrudes from the virus surface as a spike. There seems to be as few as 10 spikes on the average virion. Interacts with host CD4, CCR5 and CXCR4. Gp120 also interacts with the C-type lectins CD209/DC-SIGN and CLEC4M/DC-SIGNR (collectively referred to as DC-SIGN(R)). Gp120 and gp41 interact with GalCer. Gp120 interacts with host ITGA4/ITGB7 complex; on CD4+ T-cells, this interaction results in rapid activation of integrin ITGAL/LFA-1, which facilitates efficient cell-to-cell spreading of HIV-1. Gp120 interacts with cell-associated heparan sulfate; this interaction increases virus infectivity on permissive cells and may be involved in infection of CD4- cells. In terms of assembly, the mature envelope protein (Env) consists of a homotrimer of non-covalently associated gp120-gp41 heterodimers. The resulting complex protrudes from the virus surface as a spike. There seems to be as few as 10 spikes on the average virion. In terms of processing, highly glycosylated by host. The high number of glycan on the protein is reffered to as 'glycan shield' because it contributes to hide protein sequence from adaptive immune system. Palmitoylation of the transmembrane protein and of Env polyprotein (prior to its proteolytic cleavage) is essential for their association with host cell membrane lipid rafts. Palmitoylation is therefore required for envelope trafficking to classical lipid rafts, but not for viral replication. Post-translationally, specific enzymatic cleavages in vivo yield mature proteins. Envelope glycoproteins are synthesized as an inactive precursor that is heavily N-glycosylated and processed likely by host cell furin in the Golgi to yield the mature SU and TM proteins. The cleavage site between SU and TM requires the minimal sequence [KR]-X-[KR]-R. About 2 of the 9 disulfide bonds of gp41 are reduced by P4HB/PDI, following binding to CD4 receptor.

It is found in the virion membrane. It localises to the host cell membrane. The protein resides in the host endosome membrane. Oligomerizes in the host endoplasmic reticulum into predominantly trimers. In a second time, gp160 transits in the host Golgi, where glycosylation is completed. The precursor is then proteolytically cleaved in the trans-Golgi and thereby activated by cellular furin or furin-like proteases to produce gp120 and gp41. In terms of biological role, attaches the virus to the host lymphoid cell by binding to the primary receptor CD4. This interaction induces a structural rearrangement creating a high affinity binding site for a chemokine coreceptor like CXCR4 and/or CCR5. Acts as a ligand for CD209/DC-SIGN and CLEC4M/DC-SIGNR, which are respectively found on dendritic cells (DCs), and on endothelial cells of liver sinusoids and lymph node sinuses. These interactions allow capture of viral particles at mucosal surfaces by these cells and subsequent transmission to permissive cells. HIV subverts the migration properties of dendritic cells to gain access to CD4+ T-cells in lymph nodes. Virus transmission to permissive T-cells occurs either in trans (without DCs infection, through viral capture and transmission), or in cis (following DCs productive infection, through the usual CD4-gp120 interaction), thereby inducing a robust infection. In trans infection, bound virions remain infectious over days and it is proposed that they are not degraded, but protected in non-lysosomal acidic organelles within the DCs close to the cell membrane thus contributing to the viral infectious potential during DCs' migration from the periphery to the lymphoid tissues. On arrival at lymphoid tissues, intact virions recycle back to DCs' cell surface allowing virus transmission to CD4+ T-cells. Functionally, acts as a class I viral fusion protein. Under the current model, the protein has at least 3 conformational states: pre-fusion native state, pre-hairpin intermediate state, and post-fusion hairpin state. During fusion of viral and target intracellular membranes, the coiled coil regions (heptad repeats) assume a trimer-of-hairpins structure, positioning the fusion peptide in close proximity to the C-terminal region of the ectodomain. The formation of this structure appears to drive apposition and subsequent fusion of viral and target cell membranes. Complete fusion occurs in host cell endosomes and is dynamin-dependent, however some lipid transfer might occur at the plasma membrane. The virus undergoes clathrin-dependent internalization long before endosomal fusion, thus minimizing the surface exposure of conserved viral epitopes during fusion and reducing the efficacy of inhibitors targeting these epitopes. Membranes fusion leads to delivery of the nucleocapsid into the cytoplasm. The sequence is that of Envelope glycoprotein gp160 from Homo sapiens (Human).